The chain runs to 263 residues: Shikimate dehydrogenase (NADP(+)) (263 aa).

Shikimate-binding positions include 21–23 and threonine 67; that span reads TLS. Residue lysine 71 is the Proton acceptor of the active site. Glutamate 83 is a binding site for NADP(+). Shikimate is bound by residues asparagine 92 and aspartate 103. Residues 126–130 and leucine 204 each bind NADP(+); that span reads GAGGA. Tyrosine 206 contacts shikimate. An NADP(+)-binding site is contributed by glycine 227.

It belongs to the shikimate dehydrogenase family. As to quaternary structure, homodimer.

The catalysed reaction is shikimate + NADP(+) = 3-dehydroshikimate + NADPH + H(+). It participates in metabolic intermediate biosynthesis; chorismate biosynthesis; chorismate from D-erythrose 4-phosphate and phosphoenolpyruvate: step 4/7. Functionally, involved in the biosynthesis of the chorismate, which leads to the biosynthesis of aromatic amino acids. Catalyzes the reversible NADPH linked reduction of 3-dehydroshikimate (DHSA) to yield shikimate (SA). The polypeptide is Shikimate dehydrogenase (NADP(+)) (Sulfolobus acidocaldarius (strain ATCC 33909 / DSM 639 / JCM 8929 / NBRC 15157 / NCIMB 11770)).